Here is a 138-residue protein sequence, read N- to C-terminus: Bis(5'-nucleosyl)-tetraphosphatase [asymmetrical] (138 aa).

Positions 1 to 132 (MVVKAAGLVI…EMGSLLRKFS (132 aa)) constitute a Nudix hydrolase domain. Positions 37 to 58 (GHVDPGEDEWQAAIRETKEEAN) match the Nudix box motif.

Belongs to the Nudix hydrolase family. As to quaternary structure, monomer. It depends on Mg(2+) as a cofactor. Requires Co(2+) as cofactor. Mn(2+) is required as a cofactor. Zn(2+) serves as cofactor. The cofactor is Ca(2+).

It catalyses the reaction P(1),P(4)-bis(5'-adenosyl) tetraphosphate + H2O = AMP + ATP + 2 H(+). Functionally, asymmetrically hydrolyzes Ap4A to yield AMP and ATP. The polypeptide is Bis(5'-nucleosyl)-tetraphosphatase [asymmetrical] (ndx-4) (Caenorhabditis elegans).